We begin with the raw amino-acid sequence, 162 residues long: Small ribosomal subunit protein uS5 (162 aa).

The 64-residue stretch at 11-74 (LTDRVVHISR…EQAKKNLIKV (64 aa)) folds into the S5 DRBM domain.

It belongs to the universal ribosomal protein uS5 family. In terms of assembly, part of the 30S ribosomal subunit. Contacts proteins S4 and S8.

Functionally, with S4 and S12 plays an important role in translational accuracy. Its function is as follows. Located at the back of the 30S subunit body where it stabilizes the conformation of the head with respect to the body. In Pelobacter propionicus (strain DSM 2379 / NBRC 103807 / OttBd1), this protein is Small ribosomal subunit protein uS5.